Consider the following 267-residue polypeptide: Heme-containing CO-sensing transcriptional regulator RcoM 1 (267 aa).

In terms of domain architecture, PAS spans 15–86 (RAETFQHKLE…KSRDKLRFLL (72 aa)). H74 and M104 together coordinate heme. Positions 161 to 266 (IPVYRKNRVI…TAQLKELLGV (106 aa)) constitute an HTH LytTR-type domain.

Requires heme as cofactor.

The protein localises to the cytoplasm. One-component, b-type heme-containing aerobic sensor and transcriptional regulator that responds to CO by activating the expression of the oxidation operon cox. The sequence is that of Heme-containing CO-sensing transcriptional regulator RcoM 1 (rcoM1) from Paraburkholderia xenovorans (strain LB400).